Here is a 427-residue protein sequence, read N- to C-terminus: Cyclin-L1-1 (427 aa).

The interval 258 to 427 is disordered; the sequence is HRRTSDTNAS…SRDKDRHRRQ (170 aa). A compositionally biased stretch (polar residues) spans 263–276; sequence DTNASKESPATTVA. Basic and acidic residues-rich tracts occupy residues 289 to 311, 328 to 382, 390 to 400, and 407 to 421; these read QEKD…DDGK, KSEK…DRDR, DRSSGYSDKEK, and RDRG…SRDK.

The protein belongs to the cyclin family. Cyclin L subfamily.

This is Cyclin-L1-1 (CYCL1-1) from Oryza sativa subsp. japonica (Rice).